The primary structure comprises 353 residues: Holliday junction branch migration complex subunit RuvB (353 aa).

Residues 4-185 are large ATPase domain (RuvB-L); it reads ADRLITAVGG…FGIVQRLEFY (182 aa). ATP contacts are provided by residues isoleucine 24, arginine 25, glycine 66, lysine 69, threonine 70, threonine 71, 132-134, arginine 175, tyrosine 185, and arginine 222; that span reads EDF. Residue threonine 70 coordinates Mg(2+). The small ATPAse domain (RuvB-S) stretch occupies residues 186-256; it reads NIADLSTIVA…TADKALNLLD (71 aa). Positions 259–353 are head domain (RuvB-H); sequence EHGFDHQDRR…GEFVDDAADL (95 aa). DNA contacts are provided by arginine 295, arginine 314, and arginine 319.

The protein belongs to the RuvB family. Homohexamer. Forms an RuvA(8)-RuvB(12)-Holliday junction (HJ) complex. HJ DNA is sandwiched between 2 RuvA tetramers; dsDNA enters through RuvA and exits via RuvB. An RuvB hexamer assembles on each DNA strand where it exits the tetramer. Each RuvB hexamer is contacted by two RuvA subunits (via domain III) on 2 adjacent RuvB subunits; this complex drives branch migration. In the full resolvosome a probable DNA-RuvA(4)-RuvB(12)-RuvC(2) complex forms which resolves the HJ.

It localises to the cytoplasm. It carries out the reaction ATP + H2O = ADP + phosphate + H(+). The RuvA-RuvB-RuvC complex processes Holliday junction (HJ) DNA during genetic recombination and DNA repair, while the RuvA-RuvB complex plays an important role in the rescue of blocked DNA replication forks via replication fork reversal (RFR). RuvA specifically binds to HJ cruciform DNA, conferring on it an open structure. The RuvB hexamer acts as an ATP-dependent pump, pulling dsDNA into and through the RuvAB complex. RuvB forms 2 homohexamers on either side of HJ DNA bound by 1 or 2 RuvA tetramers; 4 subunits per hexamer contact DNA at a time. Coordinated motions by a converter formed by DNA-disengaged RuvB subunits stimulates ATP hydrolysis and nucleotide exchange. Immobilization of the converter enables RuvB to convert the ATP-contained energy into a lever motion, pulling 2 nucleotides of DNA out of the RuvA tetramer per ATP hydrolyzed, thus driving DNA branch migration. The RuvB motors rotate together with the DNA substrate, which together with the progressing nucleotide cycle form the mechanistic basis for DNA recombination by continuous HJ branch migration. Branch migration allows RuvC to scan DNA until it finds its consensus sequence, where it cleaves and resolves cruciform DNA. In Pseudomonas syringae pv. tomato (strain ATCC BAA-871 / DC3000), this protein is Holliday junction branch migration complex subunit RuvB.